A 578-amino-acid polypeptide reads, in one-letter code: Arginine--tRNA ligase (578 aa).

Residues 122–132 (PNLAKEMHVGH) carry the 'HIGH' region motif.

It belongs to the class-I aminoacyl-tRNA synthetase family. As to quaternary structure, monomer.

The protein resides in the cytoplasm. It carries out the reaction tRNA(Arg) + L-arginine + ATP = L-arginyl-tRNA(Arg) + AMP + diphosphate. This Pseudoalteromonas atlantica (strain T6c / ATCC BAA-1087) protein is Arginine--tRNA ligase.